A 124-amino-acid polypeptide reads, in one-letter code: MNVIQTIDAEQIGKLAEARAVPDFKPGDNLRVSVRVTEGERTRIQAFEGVCIARSNRGINSNFTVRKISYGEGVERVFPLYSPNVTEIAVTRRGVVRRAKLYYLRGRRGKSARIAEAARETNAD.

The protein belongs to the bacterial ribosomal protein bL19 family.

In terms of biological role, this protein is located at the 30S-50S ribosomal subunit interface and may play a role in the structure and function of the aminoacyl-tRNA binding site. The protein is Large ribosomal subunit protein bL19 of Acidiphilium cryptum (strain JF-5).